The following is a 73-amino-acid chain: Mauriporin (73 aa).

The N-terminal stretch at 1 to 22 (MNKKTLLVIFFITMLIVDEVNS) is a signal peptide.

It belongs to the non-disulfide-bridged peptide (NDBP) superfamily. Long chain multifunctional peptide (group 2) family. As to expression, expressed by the venom gland.

Its subcellular location is the secreted. The protein localises to the target cell membrane. Its function is as follows. Amphipathic peptide that displays potent antimicrobial activities against a range of Gram-positive and Gram-negative planktonic bacteria with MIC values in the range 5 uM to 10 uM. In more details, it is active on Listeria ivanovii (MIC=5 uM), Staphylococcus epidermidis (MIC=10 uM), Salmonella enterica (MIC=5 uM), Pseudomonas aeruginosa (ATCC 27853) (MIC=5 uM), Acinetobacter baumannii (MIC=5 uM), Klebsiella pneumoniae (MIC=5 uM), Escherichia coli (MIC=7.5 uM), Salmonella typhimurium (MIC=7.5 uM), Pseudomonas aeruginosa (ATCC 9027) (MIC=10 uM). Is also able to prevent P.aeruginosa biofilm formation while showing weak hemolytic activity towards human erythrocytes. Probably induces bacterial cell death through membrane permeabilization. Moreover, shows DNA-binding activities. Also exerts potent selective cytotoxic and antiproliferative activity against three different prostate cancer cell lines (IC(50)=4.4-7.8 uM), compared to non-tumorigenic cell lines (IC(50)=59.7 uM in Vero and 62.5 uM in HUVEC cells). This peptide possibly exerts its cytotoxic activity through a necrotic mode of cell death. Only shows diminished hemolytic activity against sheep erythrocytes. Does not induce cell death through apoptosis and consequently is not acting upon an intracellular target. The chain is Mauriporin from Androctonus mauritanicus (Fat-tailed scorpion).